The sequence spans 150 residues: 2-aminobenzenesulfonate 2,3-dioxygenase subunit beta (150 aa).

It belongs to the bacterial ring-hydroxylating dioxygenase beta subunit family. Heterotetramer with a alpha2beta2 structure.

It carries out the reaction 2-aminobenzenesulfonate + NADH + O2 + 2 H(+) = 2,3-dihydroxybenzenesulfonate + NH4(+) + NAD(+). With respect to regulation, inhibited by o-phenanthroline. Its function is as follows. Beta subunit of the oxygenase component of the 2-aminobenzenesulfonate 2,3-dioxygenase system (deaminating) (ABSDOS). Can use 2-aminobenzenesulfonate (ABS), benzenesulfonate (BS), 4-toluenesulfonate (TS), 2-nitrobenzenesulfonate, 3- and 4-aminobenzenesulfonates, 4-chloro- and 4-hydroxybenzenesulfonates and pyridine-3-sulfonate as substrates. No desulfonation of ABS to aminocatechol or aminophenol detected. In Alcaligenes sp, this protein is 2-aminobenzenesulfonate 2,3-dioxygenase subunit beta.